We begin with the raw amino-acid sequence, 44 residues long: Protein PsbN (44 aa).

Residues 7–29 (FFTTFLGCLLLSITGYSIYVGFG) form a helical membrane-spanning segment.

The protein belongs to the PsbN family.

It localises to the plastid. It is found in the chloroplast thylakoid membrane. May play a role in photosystem I and II biogenesis. The sequence is that of Protein PsbN from Pleurastrum terricola (Filamentous green alga).